A 20-amino-acid chain; its full sequence is Manganese peroxidase H5 (20 aa).

Belongs to the peroxidase family. Ligninase subfamily.

It is found in the secreted. It carries out the reaction 2 Mn(2+) + H2O2 + 2 H(+) = 2 Mn(3+) + 2 H2O. Functionally, catalyzes the oxidation of Mn(2+) to Mn(3+). The latter, acting as a diffusible redox mediator, is capable of oxidizing a variety of lignin compounds. This is Manganese peroxidase H5 from Phanerodontia chrysosporium (White-rot fungus).